The sequence spans 281 residues: sn-glycerol-3-phosphate transport system permease protein UgpE (281 aa).

The next 6 helical transmembrane spans lie at 16-36, 85-105, 113-133, 142-162, 202-222, and 247-267; these read LILG…AATL, FSIT…IVWF, FFWM…FPTV, LDSY…TFLF, ALFV…LLII, and WNSV…IVLV. Residues 77–268 form the ABC transmembrane type-1 domain; that stretch reads LLNSFVMAFS…IPPVVIVLVM (192 aa).

It belongs to the binding-protein-dependent transport system permease family. UgpAE subfamily. In terms of assembly, the complex is composed of two ATP-binding proteins (UgpC), two transmembrane proteins (UgpA and UgpE) and a solute-binding protein (UgpB).

The protein resides in the cell inner membrane. Functionally, part of the ABC transporter complex UgpBAEC involved in sn-glycerol-3-phosphate (G3P) import. Probably responsible for the translocation of the substrate across the membrane. Can also transport glycerophosphoryl diesters, which are hydrolyzed to G3P and alcohol during transport. The G3P moiety can be detected in the cytoplasm whereas the corresponding alcohol is usually found in the culture medium. It was proposed by Yang et al that the complex could also transport glycerol-2-phosphate (G2P) in vivo, but it was shown later by Wuttge et al that UgpB does not bind G2P, questioning this transport activity. G2P might be converted in the periplasm to G3P before its transport. This Escherichia coli (strain K12) protein is sn-glycerol-3-phosphate transport system permease protein UgpE.